The following is a 378-amino-acid chain: 3-ketosteroid-9-alpha-monooxygenase, oxygenase component (378 aa).

Positions 26 to 128 (WHCIGLAKDF…TMERNGVLFV (103 aa)) constitute a Rieske domain. [2Fe-2S] cluster is bound by residues C67, H69, C86, and H89. Fe cation contacts are provided by N175, H181, H186, and D305.

Homotrimer. The two-component system 3-ketosteroid-9-alpha-monooxygenase is composed of an oxygenase component KshA and a reductase component KshB. [2Fe-2S] cluster is required as a cofactor. Requires Fe cation as cofactor.

It carries out the reaction androsta-1,4-diene-3,17-dione + 2 reduced [2Fe-2S]-[ferredoxin] + O2 + 2 H(+) = 9alpha-hydroxyandrosta-1,4-diene-3,17-dione + 2 oxidized [2Fe-2S]-[ferredoxin] + H2O. Its activity is regulated as follows. KSH activity is completely inhibited by zinc ions. KshA is specifically inhibited by Fe(3+), Co(2+), Zn(2+) and Ni(2+) ions. In vitro, catalyzes the introduction of a 9alpha-hydroxyl moiety into the ring B of 3-ketosteroid substrates such as 1,4-androstadiene-3,17-dione (ADD), 4-androstene-3,17-dione (AD), 4-androstene-17beta-ol-3-one (testosterone), 4-pregnene-3,20-dione (progesterone), 19-nor-4-androstene-3,17-dione (nordion), 1-(5alpha)-androstene-3,17-dione, 5alpha-androstane-3,17-dione and 5beta-androstane-3,17-dione. KSH has the highest activity with 3-keto-delta4 steroid substrates. The polypeptide is 3-ketosteroid-9-alpha-monooxygenase, oxygenase component (Rhodococcus rhodochrous).